A 255-amino-acid polypeptide reads, in one-letter code: NAD kinase (255 aa).

The active-site Proton acceptor is the aspartate 44. NAD(+) is bound by residues 44–45, histidine 49, 114–115, aspartate 144, alanine 152, 155–160, and glutamine 216; these read DG, NE, and SAYNLS.

Belongs to the NAD kinase family. The cofactor is a divalent metal cation.

Its subcellular location is the cytoplasm. The enzyme catalyses NAD(+) + ATP = ADP + NADP(+) + H(+). Involved in the regulation of the intracellular balance of NAD and NADP, and is a key enzyme in the biosynthesis of NADP. Catalyzes specifically the phosphorylation on 2'-hydroxyl of the adenosine moiety of NAD to yield NADP. This Rickettsia africae (strain ESF-5) protein is NAD kinase.